Consider the following 54-residue polypeptide: Ductus ejaculatorius peptide 99B (54 aa).

The N-terminal stretch at 1–21 (MKTPLFLLLVVLASLLGLALS) is a signal peptide. Q22 carries the post-translational modification Pyrrolidone carboxylic acid. N25 carries N-linked (GlcNAc...) asparagine glycosylation. Residues C40 and C52 are joined by a disulfide bond. Positions 53–54 (RK) are excised as a propeptide.

The protein to paragonial peptide B. Ductus ejaculatorius.

Its subcellular location is the secreted. Functionally, induces post-mating responses; increased oviposition and reduced receptivity. This Drosophila melanogaster (Fruit fly) protein is Ductus ejaculatorius peptide 99B (Dup99B).